A 603-amino-acid polypeptide reads, in one-letter code: UvrABC system protein C (603 aa).

Residues 17–94 form the GIY-YIG domain; sequence TTSGCYKMLN…IKTHKPDYNV (78 aa). The UVR domain maps to 199–234; the sequence is SEILSQIDIKLKLAVQKEDFETAIKLKEMKSSLIEI.

Belongs to the UvrC family. In terms of assembly, interacts with UvrB in an incision complex.

The protein resides in the cytoplasm. Functionally, the UvrABC repair system catalyzes the recognition and processing of DNA lesions. UvrC both incises the 5' and 3' sides of the lesion. The N-terminal half is responsible for the 3' incision and the C-terminal half is responsible for the 5' incision. The chain is UvrABC system protein C from Borrelia garinii subsp. bavariensis (strain ATCC BAA-2496 / DSM 23469 / PBi) (Borreliella bavariensis).